A 309-amino-acid polypeptide reads, in one-letter code: F-box/LRR-repeat protein At3g48880 (309 aa).

The 48-residue stretch at 10-57 (LRRWEELDTDILVRIFQKFSVFELTSGLAHVCRGWRAACCDPILWKTV) folds into the F-box domain. LRR repeat units lie at residues 77-107 (VERR…IFHF), 108-133 (NLFL…VLPA), 159-184 (SIAN…KIMG), and 208-233 (CSAI…NISH).

The protein is F-box/LRR-repeat protein At3g48880 of Arabidopsis thaliana (Mouse-ear cress).